The chain runs to 182 residues: Protein SrpB (182 aa).

A run of 4 helical transmembrane segments spans residues 11-31 (WLGLSFRLLLAMLVGAVIGLN), 43-63 (TFTLVAMGSALFVMVPIQAEG), 73-93 (LSRTVQGVAAGVGFLGAGLIL), and 116-136 (IWITAALGAVIGCGLWQLGLI).

It belongs to the MgtC/SapB family.

It localises to the cell membrane. This Synechococcus elongatus (strain ATCC 33912 / PCC 7942 / FACHB-805) (Anacystis nidulans R2) protein is Protein SrpB (srpB).